A 296-amino-acid chain; its full sequence is Large ribosomal subunit protein uL18B (296 aa).

Positions 251–296 (PVHEKKPKKEVKKKRWNRAKLSLEQKKDRVAQKKASFLRAQEKADS) are disordered. The span at 255–268 (KKPKKEVKKKRWNR) shows a compositional bias: basic residues. Over residues 271–281 (LSLEQKKDRVA) the composition is skewed to basic and acidic residues.

Belongs to the universal ribosomal protein uL18 family. In terms of assembly, component of the large ribosomal subunit (LSU). Part of a LSU subcomplex, the 5S RNP which is composed of the 5S RNA, RPL5 and RPL11.

Its subcellular location is the cytoplasm. The protein resides in the nucleus. The protein localises to the nucleolus. Its function is as follows. Component of the ribosome, a large ribonucleoprotein complex responsible for the synthesis of proteins in the cell. The small ribosomal subunit (SSU) binds messenger RNAs (mRNAs) and translates the encoded message by selecting cognate aminoacyl-transfer RNA (tRNA) molecules. The large subunit (LSU) contains the ribosomal catalytic site termed the peptidyl transferase center (PTC), which catalyzes the formation of peptide bonds, thereby polymerizing the amino acids delivered by tRNAs into a polypeptide chain. The nascent polypeptides leave the ribosome through a tunnel in the LSU and interact with protein factors that function in enzymatic processing, targeting, and the membrane insertion of nascent chains at the exit of the ribosomal tunnel. As part of the 5S RNP/5S ribonucleoprotein particle it is an essential component of the LSU, required for its formation and the maturation of rRNAs. It also couples ribosome biogenesis to p53/TP53 activation. As part of the 5S RNP it accumulates in the nucleoplasm and inhibits MDM2, when ribosome biogenesis is perturbed, mediating the stabilization and the activation of TP53. The polypeptide is Large ribosomal subunit protein uL18B (rpl5-b) (Xenopus laevis (African clawed frog)).